Reading from the N-terminus, the 378-residue chain is Carbazole 1,9a-dioxygenase, terminal oxygenase component CarAa (378 aa).

Positions 29-135 (WYPVRLASEI…VEEAKGLIFV (107 aa)) constitute a Rieske domain. [2Fe-2S] cluster-binding residues include Cys-69, His-71, Cys-90, and His-93.

As to quaternary structure, homotrimer. Carbazole 1,9a-dioxygenase complex consists of a terminal oxygenase component CarAa, a ferredoxin reductase component fdr and a ferredoxin component CarAc. [2Fe-2S] cluster serves as cofactor.

The enzyme catalyses 9H-carbazole + NADH + O2 + H(+) = 2'-aminobiphenyl-2,3-diol + NAD(+). It catalyses the reaction 9H-carbazole + NADPH + O2 + H(+) = 2'-aminobiphenyl-2,3-diol + NADP(+). Its function is as follows. Part of the multicomponent carbazole 1,9a-dioxygenase (CARDO), that converts carbazole (CAR) into 2-aminobiphenyl-2,3-diol. Catalyzes the dioxygenation at the angular (C-9a) and adjacent (C-1) positions of carbazole to yield a highly unstable cis-hydrodiol intermediate which is spontaneously converted to 2-aminobiphenyl-2,3-diol. The chain is Carbazole 1,9a-dioxygenase, terminal oxygenase component CarAa (carAa) from Sphingomonas sp.